Reading from the N-terminus, the 236-residue chain is 2-C-methyl-D-erythritol 4-phosphate cytidylyltransferase (236 aa).

It belongs to the IspD/TarI cytidylyltransferase family. IspD subfamily. As to quaternary structure, homodimer.

It catalyses the reaction 2-C-methyl-D-erythritol 4-phosphate + CTP + H(+) = 4-CDP-2-C-methyl-D-erythritol + diphosphate. It participates in isoprenoid biosynthesis; isopentenyl diphosphate biosynthesis via DXP pathway; isopentenyl diphosphate from 1-deoxy-D-xylulose 5-phosphate: step 2/6. In terms of biological role, catalyzes the formation of 4-diphosphocytidyl-2-C-methyl-D-erythritol from CTP and 2-C-methyl-D-erythritol 4-phosphate (MEP). The chain is 2-C-methyl-D-erythritol 4-phosphate cytidylyltransferase from Shigella flexneri serotype 5b (strain 8401).